The following is a 356-amino-acid chain: MASTVPSTMKAWQFSSAYPTIEANLKLNNNAPLPDGAKNLGPDQVLVKVIAAGLNPVDFKFAEIPWLGRFIVGSPSTPGMDFAGRVVATGPNTKSVAVEDLKPGQLVFGRLDSPCKFGTLAEYTIAPRKGCVAIPPGARVIETACVASVGLTAYQSIVYRLKDHAGKRVFLNGGSGGCGTFGIQIAKQMGCHVTTSCSTPNVDLCRSLGADTVIDYKKTDVIAELKKMQPFDLVVDNVGVPTDLYWAAPSFTNPGAPYVQVGALAVTPGFILGNFFKARWPGWLGGGKRPWEFMHIESNVQDYEQLGRWMQEGKLRAVVDEVFGMQDDGAVKAYQKLRTGRAKGKIIVKIDETWED.

NADP(+) is bound by residues 57-60, 175-178, 198-201, Tyr-216, 261-262, and 342-343; these read VDFK, SGGC, STPN, VG, and AK.

This sequence belongs to the zinc-containing alcohol dehydrogenase family.

FAD-linked oxidoreductase; part of the gene cluster that mediates the biosynthesis of pleosporalin A, ascomycone A, as well as a third cryptic naphthoquinone derived pigment, all responsible for the coloration of conidia. The pathway begins with the biosynthesis of the cyclized heptaketide 3-acetonyl-1,6,8-trihydroxy-2-naphthaldehyde by the NR-PKS pgmA. The C-6 hydroxyl group is further methylated by the O-methyltransferase pgmB to yield fusarubinaldehyde which is in turn oxidized by the cytochrome P450 monooxygenase pgmC at C-9. The C-1 hydroxyl group is then methylated spontaneously. Although pgmE, pgmD and pgmH are essential for the production of pleosporalin A, it is not the case for the 2 other final products and it remains difficult to assign a specific function to each enzyme. PgmF and pgmG seem not to be involved in pigment biosynthesis although they were regulated by the cluster-specific transcription factor pgmR. This chain is Trans-enoyl reductase pgmF, found in Aspergillus terreus (strain NIH 2624 / FGSC A1156).